We begin with the raw amino-acid sequence, 465 residues long: Cysteine--tRNA ligase (465 aa).

Residue C27 coordinates Zn(2+). The short motif at 29–39 is the 'HIGH' region element; sequence PTVYDDAHLGH. The interval 153 to 173 is disordered; the sequence is DISHKVSDDDTQSRVEHNSEK. Residues C208, H237, and E241 each contribute to the Zn(2+) site. Residues 269-273 carry the 'KMSKS' region motif; it reads KMSKS. K272 lines the ATP pocket.

This sequence belongs to the class-I aminoacyl-tRNA synthetase family. In terms of assembly, monomer. The cofactor is Zn(2+).

The protein localises to the cytoplasm. It catalyses the reaction tRNA(Cys) + L-cysteine + ATP = L-cysteinyl-tRNA(Cys) + AMP + diphosphate. The sequence is that of Cysteine--tRNA ligase from Sulfurovum sp. (strain NBC37-1).